A 266-amino-acid polypeptide reads, in one-letter code: MDEVLSFKRGRVPLLISMPHPGTRLTPAVDAGLVEEARALTDTDWHIPRLYDFAEELGASTLAAHYSRYVVDLNRPSDDKPLYSTATTGLYPDTLFDGRPLYREGMAPSAEERMRYLAEVWTPYHRTIAEELARLKAEFGYALLWDAHSIRSHVPHLFDGRLPDFNLGTNAGASCDPALAARLEAVCAAAEGYSHVLNGRFKGGHITRHYGQPEQHVHAVQLELAQCTYMDEQAPFAYRADLAEATRAVIRELLESLLAWGRERYA.

Belongs to the N-formylglutamate deformylase family. In terms of assembly, monomer.

The enzyme catalyses N-formyl-L-glutamate + H2O = formate + L-glutamate. The protein operates within amino-acid degradation; L-histidine degradation into L-glutamate; L-glutamate from N-formimidoyl-L-glutamate (deiminase route): step 2/2. Catalyzes the hydrolysis of N-formyl-L-glutamate to formate and L-glutamate. Shows weak activity with N-formyl-L-glutamine. This chain is N-formylglutamate deformylase, found in Pseudomonas aeruginosa (strain ATCC 15692 / DSM 22644 / CIP 104116 / JCM 14847 / LMG 12228 / 1C / PRS 101 / PAO1).